We begin with the raw amino-acid sequence, 165 residues long: Peptide methionine sulfoxide reductase MsrA (165 aa).

Residue Cys-10 is part of the active site.

This sequence belongs to the MsrA Met sulfoxide reductase family.

The enzyme catalyses L-methionyl-[protein] + [thioredoxin]-disulfide + H2O = L-methionyl-(S)-S-oxide-[protein] + [thioredoxin]-dithiol. The catalysed reaction is [thioredoxin]-disulfide + L-methionine + H2O = L-methionine (S)-S-oxide + [thioredoxin]-dithiol. Functionally, has an important function as a repair enzyme for proteins that have been inactivated by oxidation. Catalyzes the reversible oxidation-reduction of methionine sulfoxide in proteins to methionine. The polypeptide is Peptide methionine sulfoxide reductase MsrA (Campylobacter jejuni (strain RM1221)).